Consider the following 177-residue polypeptide: Phycocyanin-645 beta chain (177 aa).

Tyr18 provides a ligand contact to mesobiliverdin. (2R,3E)-phycocyanobilin contacts are provided by Lys28, Asn35, and Asp39. Residues Cys50, Asp54, and Cys61 each contribute to the 15,16-dihydrobiliverdin site. 4 residues coordinate (2R,3E)-phycocyanobilin: Arg77, Cys82, Arg84, and Asp85. Gln148 contributes to the 15,16-dihydrobiliverdin binding site. (2R,3E)-phycocyanobilin is bound by residues Pro154, Gly156, and Cys158.

Belongs to the phycobiliprotein family. In terms of assembly, heterotetramer of 2 different alpha chains and 2 identical beta chains which form 2 alpha-beta heterodimers within the heterotetramer. In terms of processing, contains two phycocyanobilin chromophores, one mesobiliverdin chromophore and one 15,16-dihydrobiliverdin chromophore with binding mediated by both the alpha and beta subunits.

The protein resides in the plastid. It localises to the chloroplast thylakoid membrane. Its function is as follows. Light-harvesting photosynthetic tetrapyrrole chromophore-protein from the phycobiliprotein complex. The polypeptide is Phycocyanin-645 beta chain (Chroomonas sp).